The primary structure comprises 625 residues: Cytochrome c oxidase subunit 1 (625 aa).

Residues 23 to 43 traverse the membrane as a helical segment; it reads IAIMYLIAGTLFFVKAGVMAL. His-69 serves as a coordination point for Fe(II)-heme a. Helical transmembrane passes span 72-92, 99-119, 151-171, 195-215, 240-260, and 272-292; these read IMLFLAATPLLFAFMNYVIPL, VAFPFVNALGFWIFFFGGLLL, FYVLGLQVSGIGTLISAINFL, FISSTLILFAFTPLAAGLALL, IFWIFGHPEVYILVLPAFGII, and LFGYTAMVFATMIIAFLGFMV. His-246 and Tyr-250 together coordinate Cu cation. The 1'-histidyl-3'-tyrosine (His-Tyr) cross-link spans 246–250; the sequence is HPEVY. His-295 and His-296 together coordinate Cu cation. A run of 2 helical transmembrane segments spans residues 309–329 and 343–363; these read IFAVATMTIAVPTGIKIFNWL and MLFASSFVPTFVLGGVTGVML. His-381 is a heme a3 binding site. The next 5 membrane-spanning stretches (helical) occupy residues 382 to 402, 417 to 437, 460 to 480, 551 to 571, and 577 to 597; these read FHYIIVGGIVLSLFAGLFYWY, LFFWVFYIGFHLTFFVQHLLG, ISTIGTFFMSAGVILLVINVI, SILPFIMSIGLFFAGFGLIML, and IINPWIVAIGGLALTFGCMFV. His-383 serves as a coordination point for Fe(II)-heme a.

This sequence belongs to the heme-copper respiratory oxidase family.

It is found in the cell membrane. The enzyme catalyses 4 Fe(II)-[cytochrome c] + O2 + 8 H(+)(in) = 4 Fe(III)-[cytochrome c] + 2 H2O + 4 H(+)(out). The protein operates within energy metabolism; oxidative phosphorylation. Its function is as follows. Cytochrome c oxidase is the component of the respiratory chain that catalyzes the reduction of oxygen to water. Subunits 1-3 form the functional core of the enzyme complex. CO I is the catalytic subunit of the enzyme. Electrons originating in cytochrome c are transferred via the copper A center of subunit 2 and heme A of subunit 1 to the bimetallic center formed by heme A3 and copper B. The chain is Cytochrome c oxidase subunit 1 (ctaD) from Alkalihalophilus pseudofirmus (strain ATCC BAA-2126 / JCM 17055 / OF4) (Bacillus pseudofirmus).